We begin with the raw amino-acid sequence, 413 residues long: Elongation factor 1-alpha (413 aa).

In terms of domain architecture, tr-type G spans 5-211; sequence KTHMNLAFIG…DALDEPDKPV (207 aa). The G1 stretch occupies residues 14–21; the sequence is GHVDHGKS. Residue 14-21 participates in GTP binding; the sequence is GHVDHGKS. Position 21 (serine 21) interacts with Mg(2+). The G2 stretch occupies residues 60–64; the sequence is GVTID. Residues 81 to 84 are G3; the sequence is DCPG. GTP-binding positions include 81-85 and 136-139; these read DCPGH and NKMD. Residues 136 to 139 are G4; the sequence is NKMD. Residues 175-177 are G5; the sequence is SAF.

The protein belongs to the TRAFAC class translation factor GTPase superfamily. Classic translation factor GTPase family. EF-Tu/EF-1A subfamily.

It localises to the cytoplasm. It carries out the reaction GTP + H2O = GDP + phosphate + H(+). GTP hydrolase that promotes the GTP-dependent binding of aminoacyl-tRNA to the A-site of ribosomes during protein biosynthesis. The sequence is that of Elongation factor 1-alpha from Methanosphaera stadtmanae (strain ATCC 43021 / DSM 3091 / JCM 11832 / MCB-3).